An 80-amino-acid chain; its full sequence is Toxin-like peptide AaF1CA1 (80 aa).

Positions 1–22 are cleaved as a signal peptide; the sequence is MMKLVLFSVIVILFSLIGSIHG. The 56-residue stretch at 25–80 folds into the LCN-type CS-alpha/beta domain; that stretch reads VPGNYPLRPFRYRYGCAVPGDSDYCVRVCRKHGVRYGYCWFFTCWCEYLEDKNIKI. Cystine bridges form between cysteine 40–cysteine 63, cysteine 49–cysteine 68, and cysteine 53–cysteine 70.

The protein belongs to the long (3 C-C) scorpion toxin superfamily. As to expression, expressed by the venom gland.

It is found in the secreted. In terms of biological role, probable ion channel inhibitor. The chain is Toxin-like peptide AaF1CA1 from Androctonus australis (Sahara scorpion).